Here is a 384-residue protein sequence, read N- to C-terminus: Tetraacyldisaccharide 4'-kinase (384 aa).

Residue T72–T79 participates in ATP binding.

Belongs to the LpxK family.

It carries out the reaction a lipid A disaccharide + ATP = a lipid IVA + ADP + H(+). It participates in glycolipid biosynthesis; lipid IV(A) biosynthesis; lipid IV(A) from (3R)-3-hydroxytetradecanoyl-[acyl-carrier-protein] and UDP-N-acetyl-alpha-D-glucosamine: step 6/6. Its function is as follows. Transfers the gamma-phosphate of ATP to the 4'-position of a tetraacyldisaccharide 1-phosphate intermediate (termed DS-1-P) to form tetraacyldisaccharide 1,4'-bis-phosphate (lipid IVA). The sequence is that of Tetraacyldisaccharide 4'-kinase from Halothermothrix orenii (strain H 168 / OCM 544 / DSM 9562).